The primary structure comprises 565 residues: Proline--tRNA ligase (565 aa).

It belongs to the class-II aminoacyl-tRNA synthetase family. ProS type 1 subfamily. In terms of assembly, homodimer.

The protein resides in the cytoplasm. It catalyses the reaction tRNA(Pro) + L-proline + ATP = L-prolyl-tRNA(Pro) + AMP + diphosphate. Functionally, catalyzes the attachment of proline to tRNA(Pro) in a two-step reaction: proline is first activated by ATP to form Pro-AMP and then transferred to the acceptor end of tRNA(Pro). As ProRS can inadvertently accommodate and process non-cognate amino acids such as alanine and cysteine, to avoid such errors it has two additional distinct editing activities against alanine. One activity is designated as 'pretransfer' editing and involves the tRNA(Pro)-independent hydrolysis of activated Ala-AMP. The other activity is designated 'posttransfer' editing and involves deacylation of mischarged Ala-tRNA(Pro). The misacylated Cys-tRNA(Pro) is not edited by ProRS. The protein is Proline--tRNA ligase of Francisella tularensis subsp. mediasiatica (strain FSC147).